The sequence spans 245 residues: tRNA1(Val) (adenine(37)-N6)-methyltransferase (245 aa).

It belongs to the methyltransferase superfamily. tRNA (adenine-N(6)-)-methyltransferase family.

Its subcellular location is the cytoplasm. The enzyme catalyses adenosine(37) in tRNA1(Val) + S-adenosyl-L-methionine = N(6)-methyladenosine(37) in tRNA1(Val) + S-adenosyl-L-homocysteine + H(+). Its function is as follows. Specifically methylates the adenine in position 37 of tRNA(1)(Val) (anticodon cmo5UAC). The sequence is that of tRNA1(Val) (adenine(37)-N6)-methyltransferase from Escherichia coli (strain SE11).